A 423-amino-acid chain; its full sequence is Phosphoribosylamine--glycine ligase (423 aa).

Positions 107 to 312 (KDLCARYGIP…LLPLLYAAAT (206 aa)) constitute an ATP-grasp domain. 133-193 (IREEGAPIVI…EAYLDGEEAS (61 aa)) contributes to the ATP binding site. The Mg(2+) site is built by Glu-282 and Asn-284.

The protein belongs to the GARS family. Mg(2+) serves as cofactor. Mn(2+) is required as a cofactor.

It catalyses the reaction 5-phospho-beta-D-ribosylamine + glycine + ATP = N(1)-(5-phospho-beta-D-ribosyl)glycinamide + ADP + phosphate + H(+). The protein operates within purine metabolism; IMP biosynthesis via de novo pathway; N(1)-(5-phospho-D-ribosyl)glycinamide from 5-phospho-alpha-D-ribose 1-diphosphate: step 2/2. The chain is Phosphoribosylamine--glycine ligase from Rhizobium meliloti (strain 1021) (Ensifer meliloti).